A 465-amino-acid chain; its full sequence is Iron-sulfur cluster assembly SufBD family protein SAR0880 (465 aa).

The protein belongs to the iron-sulfur cluster assembly SufBD family.

The protein is Iron-sulfur cluster assembly SufBD family protein SAR0880 of Staphylococcus aureus (strain MRSA252).